Reading from the N-terminus, the 1197-residue chain is Probable DNA polymerase (1197 aa).

The protein belongs to the DNA polymerase type-B family.

Its subcellular location is the mitochondrion. The enzyme catalyses DNA(n) + a 2'-deoxyribonucleoside 5'-triphosphate = DNA(n+1) + diphosphate. The sequence is that of Probable DNA polymerase from Podospora anserina (Pleurage anserina).